A 98-amino-acid polypeptide reads, in one-letter code: Small ribosomal subunit protein eS24 (98 aa).

Belongs to the eukaryotic ribosomal protein eS24 family.

This chain is Small ribosomal subunit protein eS24 (rps2e), found in Thermoplasma acidophilum (strain ATCC 25905 / DSM 1728 / JCM 9062 / NBRC 15155 / AMRC-C165).